A 242-amino-acid chain; its full sequence is Uridylate kinase (242 aa).

ATP is bound at residue 8 to 11; the sequence is KFSG. G50 contributes to the UMP binding site. ATP is bound by residues G51 and R55. Residues D71 and 132 to 139 contribute to the UMP site; that span reads TGNPFFTT. Residues T159, Y165, and D168 each coordinate ATP.

This sequence belongs to the UMP kinase family. Homohexamer.

It is found in the cytoplasm. The catalysed reaction is UMP + ATP = UDP + ADP. The protein operates within pyrimidine metabolism; CTP biosynthesis via de novo pathway; UDP from UMP (UMPK route): step 1/1. With respect to regulation, inhibited by UTP. Functionally, catalyzes the reversible phosphorylation of UMP to UDP. The protein is Uridylate kinase of Nitratiruptor sp. (strain SB155-2).